The chain runs to 193 residues: Ribose 1,5-bisphosphate phosphokinase PhnN (193 aa).

9 to 16 (GPSGAGKD) contributes to the ATP binding site.

The protein belongs to the ribose 1,5-bisphosphokinase family.

The catalysed reaction is alpha-D-ribose 1,5-bisphosphate + ATP = 5-phospho-alpha-D-ribose 1-diphosphate + ADP. Its pathway is metabolic intermediate biosynthesis; 5-phospho-alpha-D-ribose 1-diphosphate biosynthesis; 5-phospho-alpha-D-ribose 1-diphosphate from D-ribose 5-phosphate (route II): step 3/3. Functionally, catalyzes the phosphorylation of ribose 1,5-bisphosphate to 5-phospho-D-ribosyl alpha-1-diphosphate (PRPP). The protein is Ribose 1,5-bisphosphate phosphokinase PhnN of Yersinia pestis.